A 266-amino-acid polypeptide reads, in one-letter code: Putative hydro-lyase Jann_2570 (266 aa).

It belongs to the D-glutamate cyclase family.

The protein is Putative hydro-lyase Jann_2570 of Jannaschia sp. (strain CCS1).